The following is a 351-amino-acid chain: Fe(3+) ions import ATP-binding protein FbpC (351 aa).

Positions 7–237 (VVLKNICKRF…PKSMFMANFM (231 aa)) constitute an ABC transporter domain. 39–46 (GPSGCGKT) is an ATP binding site.

Belongs to the ABC transporter superfamily. Fe(3+) ion importer (TC 3.A.1.10) family. In terms of assembly, the complex is composed of two ATP-binding proteins (FbpC), two transmembrane proteins (FbpB) and a solute-binding protein (FbpA).

Its subcellular location is the cell inner membrane. The enzyme catalyses Fe(3+)(out) + ATP + H2O = Fe(3+)(in) + ADP + phosphate + H(+). Its function is as follows. Part of the ABC transporter complex FbpABC involved in Fe(3+) ions import. Responsible for energy coupling to the transport system. The sequence is that of Fe(3+) ions import ATP-binding protein FbpC from Vibrio cholerae serotype O1 (strain ATCC 39315 / El Tor Inaba N16961).